The following is an 86-amino-acid chain: Probable acyl carrier protein CCNA_01221 (86 aa).

The Carrier domain maps to 6–83; it reads TVTDLSLREI…DLSKLINDLR (78 aa). The residue at position 43 (S43) is an O-(pantetheine 4'-phosphoryl)serine.

This sequence belongs to the acyl carrier protein (ACP) family.

It participates in lipid metabolism; sphingolipid metabolism. Functionally, involved in de novo bacterial ceramide synthesis. The protein is Probable acyl carrier protein CCNA_01221 of Caulobacter vibrioides (strain NA1000 / CB15N) (Caulobacter crescentus).